Here is a 298-residue protein sequence, read N- to C-terminus: Inosose dehydratase (298 aa).

This sequence belongs to the IolE/MocC family. Glutathione is required as a cofactor. Requires Co(2+) as cofactor. The cofactor is Mn(2+).

It carries out the reaction scyllo-inosose = 3D-3,5/4-trihydroxycyclohexane-1,2-dione + H2O. It functions in the pathway polyol metabolism; myo-inositol degradation into acetyl-CoA; acetyl-CoA from myo-inositol: step 2/7. Functionally, catalyzes the dehydration of inosose (2-keto-myo-inositol, 2KMI or 2,4,6/3,5-pentahydroxycyclohexanone) to 3D-(3,5/4)-trihydroxycyclohexane-1,2-dione (D-2,3-diketo-4-deoxy-epi-inositol). The chain is Inosose dehydratase from Clostridium beijerinckii (strain ATCC 51743 / NCIMB 8052) (Clostridium acetobutylicum).